The chain runs to 111 residues: Nucleoid-associated protein Clim_0875 (111 aa).

It belongs to the YbaB/EbfC family. As to quaternary structure, homodimer.

The protein localises to the cytoplasm. Its subcellular location is the nucleoid. Its function is as follows. Binds to DNA and alters its conformation. May be involved in regulation of gene expression, nucleoid organization and DNA protection. This Chlorobium limicola (strain DSM 245 / NBRC 103803 / 6330) protein is Nucleoid-associated protein Clim_0875.